Reading from the N-terminus, the 60-residue chain is Large ribosomal subunit protein bL32 (60 aa).

Residues 1-60 (MAVQQNKKSPSKRGMHRSHNALTVPGIAVEPTTGETHMRHHISPNGFYRGRQVLKNKSEA) form a disordered region. Over residues 9 to 19 (SPSKRGMHRSH) the composition is skewed to basic residues.

This sequence belongs to the bacterial ribosomal protein bL32 family.

The polypeptide is Large ribosomal subunit protein bL32 (Acidovorax ebreus (strain TPSY) (Diaphorobacter sp. (strain TPSY))).